A 274-amino-acid chain; its full sequence is Putative pyruvate, phosphate dikinase regulatory protein (274 aa).

Position 151–158 (151–158 (GVSRTSKT)) interacts with ADP.

The protein belongs to the pyruvate, phosphate/water dikinase regulatory protein family. PDRP subfamily.

It carries out the reaction N(tele)-phospho-L-histidyl/L-threonyl-[pyruvate, phosphate dikinase] + ADP = N(tele)-phospho-L-histidyl/O-phospho-L-threonyl-[pyruvate, phosphate dikinase] + AMP + H(+). The catalysed reaction is N(tele)-phospho-L-histidyl/O-phospho-L-threonyl-[pyruvate, phosphate dikinase] + phosphate + H(+) = N(tele)-phospho-L-histidyl/L-threonyl-[pyruvate, phosphate dikinase] + diphosphate. Bifunctional serine/threonine kinase and phosphorylase involved in the regulation of the pyruvate, phosphate dikinase (PPDK) by catalyzing its phosphorylation/dephosphorylation. This is Putative pyruvate, phosphate dikinase regulatory protein from Pelagibacter ubique (strain HTCC1062).